The chain runs to 102 residues: Death-associated protein 1 (102 aa).

Residues 1–102 (MSSPPEGKLE…RTQHIQQPRK (102 aa)) form a disordered region. At Ser-2 the chain carries N-acetylserine. Ser-3 carries the phosphoserine; by MTOR modification. Position 29 is an N6-acetyllysine (Lys-29). A compositionally biased stretch (basic and acidic residues) spans 32–43 (HTGDTKEEKDKD). Ser-49 is subject to Phosphoserine. A Phosphoserine; by MTOR modification is found at Ser-51. At Ser-91 the chain carries Phosphoserine. Residues 92 to 102 (PRTQHIQQPRK) are compositionally biased toward polar residues.

The protein belongs to the DAP-DAPL1 family. Associates with ribosomes; inhibiting translation. Interacts with eiF5a (EIF5A and EIF5A2); inhibiting translation. In terms of processing, phosphorylated. Phosphorylation by MTOR inhibits the suppressive activity of DAP toward autophagy.

Its function is as follows. Ribosome-binding protein involved in ribosome hibernation, a process during which ribosomes are stabilized in an inactive state and preserved from proteasomal degradation. Acts via its association with eiF5a (EIF5A and EIF5A2) at the polypeptide exit tunnel of the ribosome, preventing mRNA translation. Involved in ribosome hibernation in the mature oocyte by preventing mRNA translation, leading to ribosome inactivation. Ribosomes, which are produced in large quantities during oogenesis, are stored and translationally repressed in the oocyte and early embryo. Also acts as a negative regulator of autophagy. Involved in mediating interferon-gamma-induced cell death. This chain is Death-associated protein 1, found in Homo sapiens (Human).